Reading from the N-terminus, the 562-residue chain is Arginine--tRNA ligase 1 (562 aa).

The short motif at 122 to 132 (PNIAKPFSMGH) is the 'HIGH' region element.

It belongs to the class-I aminoacyl-tRNA synthetase family. Monomer.

The protein localises to the cytoplasm. The enzyme catalyses tRNA(Arg) + L-arginine + ATP = L-arginyl-tRNA(Arg) + AMP + diphosphate. The sequence is that of Arginine--tRNA ligase 1 from Bacillus thuringiensis subsp. konkukian (strain 97-27).